A 278-amino-acid chain; its full sequence is Tryptophan synthase alpha chain (278 aa).

Active-site proton acceptor residues include Glu49 and Asp60.

The protein belongs to the TrpA family. As to quaternary structure, tetramer of two alpha and two beta chains.

The catalysed reaction is (1S,2R)-1-C-(indol-3-yl)glycerol 3-phosphate + L-serine = D-glyceraldehyde 3-phosphate + L-tryptophan + H2O. It participates in amino-acid biosynthesis; L-tryptophan biosynthesis; L-tryptophan from chorismate: step 5/5. The alpha subunit is responsible for the aldol cleavage of indoleglycerol phosphate to indole and glyceraldehyde 3-phosphate. In Corynebacterium diphtheriae (strain ATCC 700971 / NCTC 13129 / Biotype gravis), this protein is Tryptophan synthase alpha chain.